We begin with the raw amino-acid sequence, 533 residues long: MELGDTTSVIPDSFMGYRDDITMQMSMVLDQIRAPLIVPALRLGVYICLTMSVMLFVERVYMGIVISLVKLFGRKPDKRFKYEPIKDDIELGNSAYPMVLIQIPMFNEREVYQLSIGAACGLSWPSDRIVIQVLDDSTDPTIKDLVEMECSRWASKGVNIKYEIRDNRNGYKAGALKEGMKKSYVKSCDYVAIFDADFQPEADFLWRTVPYLLHNPKLALVQARWKFVNSDECLMTRMQEMSLDYHFTVEQEVGSSTYAFFGFNGTAGIWRISALNEAGGWKDRTTVEDMDLAVRASLKGWKFLYLGSLKVKNELPSTFKAYRYQQHRWSCGPANLFRKMAFEIMTNKNVTLWKKVHVIYSFFVVRKLVAHIVTFIFYCVILPATVLVPEVTVPKWGAVYIPSVITLLNAVGTPRSLHLMVFWILFENVMSLHRTKATFIGLLEGGRVNEWIVTEKLGDVKAKSATKTSKKVIRFRFGDRIHVLELGVGMYLLFVGCYDAFFGKNHYYLYLFAQAIAFFIAGFGQIGTIVPNH.

A helical transmembrane segment spans residues 37–57; that stretch reads IVPALRLGVYICLTMSVMLFV. The active site involves Asp-136. Asp-195 and Asp-197 together coordinate substrate. The active site involves Asp-289. 4 helical membrane passes run 368 to 388, 404 to 426, 483 to 503, and 510 to 530; these read LVAH…TVLV, VITL…WILF, VLEL…AFFG, and YLFA…GTIV.

Belongs to the glycosyltransferase 2 family. Plant cellulose synthase-like A subfamily. As to expression, expressed in cotyledons at the base of the hypocotyls, in root elongation zone, lateral root primordia, vascular system of young leaves, abscission zone of the pedicle,.

It localises to the golgi apparatus membrane. The catalysed reaction is GDP-mannose + (glucomannan)n = GDP + (glucomannan)n+1.. Possesses glucomannan synthase and mannan synthase activities in vitro. Mannan synthase consists of a 4-beta-mannosyltransferase activity on mannan using GDP-mannose. The beta-1,4-mannan product is the backbone for galactomannan synthesis by galactomannan galactosyltransferase. Galactomannan is a noncellulosic polysaccharides of plant cell wall. Required for lateral root development. The chain is Glucomannan 4-beta-mannosyltransferase 9 from Arabidopsis thaliana (Mouse-ear cress).